The primary structure comprises 617 residues: 1-deoxy-D-xylulose-5-phosphate synthase (617 aa).

Residues His-76 and 117–119 (GHS) contribute to the thiamine diphosphate site. A Mg(2+)-binding site is contributed by Asp-148. Thiamine diphosphate-binding positions include 149–150 (GA), Asn-177, Tyr-285, and Glu-366. Asn-177 contacts Mg(2+).

It belongs to the transketolase family. DXPS subfamily. Homodimer. Mg(2+) is required as a cofactor. It depends on thiamine diphosphate as a cofactor.

The enzyme catalyses D-glyceraldehyde 3-phosphate + pyruvate + H(+) = 1-deoxy-D-xylulose 5-phosphate + CO2. The protein operates within metabolic intermediate biosynthesis; 1-deoxy-D-xylulose 5-phosphate biosynthesis; 1-deoxy-D-xylulose 5-phosphate from D-glyceraldehyde 3-phosphate and pyruvate: step 1/1. Functionally, catalyzes the acyloin condensation reaction between C atoms 2 and 3 of pyruvate and glyceraldehyde 3-phosphate to yield 1-deoxy-D-xylulose-5-phosphate (DXP). The polypeptide is 1-deoxy-D-xylulose-5-phosphate synthase (Histophilus somni (strain 2336) (Haemophilus somnus)).